The sequence spans 164 residues: V-type proton ATPase 16 kDa proteolipid subunit (164 aa).

The Lumenal segment spans residues 1–9; the sequence is MSNFAGDET. A helical membrane pass occupies residues 10-32; the sequence is APFFGFLGAAAALVFSCMGAAYG. Residues 33–54 lie on the Cytoplasmic side of the membrane; the sequence is TAKSGVGVASMGVMRPELVMKS. Residues 55 to 75 form a helical membrane-spanning segment; the sequence is IVPVVMAGVLGIYGLIIAVII. Over 76-94 the chain is Lumenal; sequence STGINPKTKSYYLFDGYAH. The chain crosses the membrane as a helical span at residues 95-116; it reads LSSGLACGLAGLSAGMAIGIVG. The Cytoplasmic portion of the chain corresponds to 117–128; that stretch reads DAGVRANAQQPK. A helical transmembrane segment spans residues 129 to 154; the sequence is LFVGMILILIFAEALALYGLIVGIIL. Over 155-164 the chain is Lumenal; sequence SSRAGQSRAE.

It belongs to the V-ATPase proteolipid subunit family. In terms of assembly, V-ATPase is a heteromultimeric enzyme composed of a peripheral catalytic V1 complex (main components: subunits A, B, C, D, E, and F) attached to an integral membrane V0 proton pore complex (main component: the proteolipid protein; which is present as a hexamer that forms the proton-conducting pore).

It localises to the vacuole membrane. Proton-conducting pore forming subunit of the membrane integral V0 complex of vacuolar ATPase. V-ATPase is responsible for acidifying a variety of intracellular compartments in eukaryotic cells. In Solanum lycopersicum (Tomato), this protein is V-type proton ATPase 16 kDa proteolipid subunit.